The sequence spans 427 residues: MKFHTVYVGKNTKIDLDFALQAQTNNFSSLEELRESFTNSGQTLSTQLFWKPVIDKLITDEGNDLTTIARTAIGENLFDLKVNLTDSVIDGTVLTKARKSFEERILNPFIEQRKEAKRIHDEEQARLERERKQLEEELKGKEKKVQELIREKTRFLSSFNNVKSFKDYWKGKGKNVEIKSQLIEVLKLAFKTDRNRTFIFLTDAFRNAVDWYYNAKKDDQDSKKKAFGDVGIELPKLGVDGIFIPNWLRWELKHRANLKLNLQSVTTKDIHNDINGWGVPKQIFWNEAKNGIEFRQTYPFKYAFQIRMKYTGDYGLKGIYWTLANWGLGGIPPEWKGEMELVLNVDGQLADWITSKKDYPGTLFQFRDDKLLFTLHITQWINVQDQRFKGLLKKQQLDVLEPWGGDIKVPVVDLASYLHFLILADKS.

Belongs to the MG032/MG096/MG288 family.

This is an uncharacterized protein from Mycoplasma pneumoniae (strain ATCC 29342 / M129 / Subtype 1) (Mycoplasmoides pneumoniae).